Here is a 228-residue protein sequence, read N- to C-terminus: Phosphoribosylformylglycinamidine synthase subunit PurQ (228 aa).

The Glutamine amidotransferase type-1 domain occupies 2–225; that stretch reads KAAVISFPGS…INQTEGADVR (224 aa). Cys-86 functions as the Nucleophile in the catalytic mechanism. Catalysis depends on residues His-194 and Glu-196.

Part of the FGAM synthase complex composed of 1 PurL, 1 PurQ and 2 PurS subunits.

The protein resides in the cytoplasm. It carries out the reaction N(2)-formyl-N(1)-(5-phospho-beta-D-ribosyl)glycinamide + L-glutamine + ATP + H2O = 2-formamido-N(1)-(5-O-phospho-beta-D-ribosyl)acetamidine + L-glutamate + ADP + phosphate + H(+). The catalysed reaction is L-glutamine + H2O = L-glutamate + NH4(+). Its pathway is purine metabolism; IMP biosynthesis via de novo pathway; 5-amino-1-(5-phospho-D-ribosyl)imidazole from N(2)-formyl-N(1)-(5-phospho-D-ribosyl)glycinamide: step 1/2. In terms of biological role, part of the phosphoribosylformylglycinamidine synthase complex involved in the purines biosynthetic pathway. Catalyzes the ATP-dependent conversion of formylglycinamide ribonucleotide (FGAR) and glutamine to yield formylglycinamidine ribonucleotide (FGAM) and glutamate. The FGAM synthase complex is composed of three subunits. PurQ produces an ammonia molecule by converting glutamine to glutamate. PurL transfers the ammonia molecule to FGAR to form FGAM in an ATP-dependent manner. PurS interacts with PurQ and PurL and is thought to assist in the transfer of the ammonia molecule from PurQ to PurL. In Lacticaseibacillus paracasei (strain ATCC 334 / BCRC 17002 / CCUG 31169 / CIP 107868 / KCTC 3260 / NRRL B-441) (Lactobacillus paracasei), this protein is Phosphoribosylformylglycinamidine synthase subunit PurQ.